We begin with the raw amino-acid sequence, 488 residues long: Bifunctional protein GlmU (488 aa).

The interval 1–237 is pyrophosphorylase; it reads MPRTRTPLAA…AEEASGVNDR (237 aa). Residues 13 to 16, lysine 27, glutamine 82, 87 to 88, 110 to 112, glycine 149, glutamate 164, asparagine 179, and asparagine 235 each bind UDP-N-acetyl-alpha-D-glucosamine; these read LAAG, GT, and SGD. Aspartate 112 is a Mg(2+) binding site. Asparagine 235 contacts Mg(2+). A linker region spans residues 238–258; it reads IELARANRVMVGRLAEAFMRA. Residues 259-488 are N-acetyltransferase; it reads GVTIEDPARF…KGRPAARRAS (230 aa). UDP-N-acetyl-alpha-D-glucosamine contacts are provided by arginine 341 and lysine 359. Histidine 371 serves as the catalytic Proton acceptor. UDP-N-acetyl-alpha-D-glucosamine is bound by residues tyrosine 374 and asparagine 385. Acetyl-CoA contacts are provided by residues alanine 388, 394–395, serine 413, alanine 431, and arginine 448; that span reads NY. The tract at residues 459–488 is disordered; sequence AQRQAEKQMKGTATGPAPARKGRPAARRAS. Positions 478–488 are enriched in basic residues; that stretch reads RKGRPAARRAS.

The protein in the N-terminal section; belongs to the N-acetylglucosamine-1-phosphate uridyltransferase family. This sequence in the C-terminal section; belongs to the transferase hexapeptide repeat family. As to quaternary structure, homotrimer. It depends on Mg(2+) as a cofactor.

Its subcellular location is the cytoplasm. The enzyme catalyses alpha-D-glucosamine 1-phosphate + acetyl-CoA = N-acetyl-alpha-D-glucosamine 1-phosphate + CoA + H(+). The catalysed reaction is N-acetyl-alpha-D-glucosamine 1-phosphate + UTP + H(+) = UDP-N-acetyl-alpha-D-glucosamine + diphosphate. The protein operates within nucleotide-sugar biosynthesis; UDP-N-acetyl-alpha-D-glucosamine biosynthesis; N-acetyl-alpha-D-glucosamine 1-phosphate from alpha-D-glucosamine 6-phosphate (route II): step 2/2. It participates in nucleotide-sugar biosynthesis; UDP-N-acetyl-alpha-D-glucosamine biosynthesis; UDP-N-acetyl-alpha-D-glucosamine from N-acetyl-alpha-D-glucosamine 1-phosphate: step 1/1. It functions in the pathway bacterial outer membrane biogenesis; LPS lipid A biosynthesis. Functionally, catalyzes the last two sequential reactions in the de novo biosynthetic pathway for UDP-N-acetylglucosamine (UDP-GlcNAc). The C-terminal domain catalyzes the transfer of acetyl group from acetyl coenzyme A to glucosamine-1-phosphate (GlcN-1-P) to produce N-acetylglucosamine-1-phosphate (GlcNAc-1-P), which is converted into UDP-GlcNAc by the transfer of uridine 5-monophosphate (from uridine 5-triphosphate), a reaction catalyzed by the N-terminal domain. In Anaeromyxobacter dehalogenans (strain 2CP-C), this protein is Bifunctional protein GlmU.